A 355-amino-acid chain; its full sequence is C-C chemokine receptor type 8 (355 aa).

The Extracellular portion of the chain corresponds to 1 to 35; that stretch reads MDYTLDLSVTTVTDYYYPDIFSSPCDAELIQTNGK. The chain crosses the membrane as a helical span at residues 36–63; the sequence is LLLAVFYCLLFVFSLLGNSLVILVLVVC. Residues 64–73 lie on the Cytoplasmic side of the membrane; it reads KKLRSITDVY. Residues 74–93 form a helical membrane-spanning segment; the sequence is LLNLALSDLLFVFSFPFQTY. Residues 94-107 lie on the Extracellular side of the membrane; it reads YLLDQWVFGTVMCK. Cys106 and Cys183 are joined by a disulfide. Residues 108-129 form a helical membrane-spanning segment; it reads VVSGFYYIGFYSSMFFITLMSV. The Cytoplasmic portion of the chain corresponds to 130–146; that stretch reads DRYLAVVHAVYALKVRT. Residues 147–171 form a helical membrane-spanning segment; the sequence is IRMGTTLCLAVWLTAIMATIPLLVF. Residues 172 to 202 lie on the Extracellular side of the membrane; that stretch reads YQVASEDGVLQCYSFYNQQTLKWKIFTNFKM. The helical transmembrane segment at 203 to 222 threads the bilayer; that stretch reads NILGLLIPFTIFMFCYIKIL. The Cytoplasmic portion of the chain corresponds to 223–238; it reads HQLKRCQNHNKTKAIR. Residues 239–263 form a helical membrane-spanning segment; the sequence is LVLIVVIASLLFWVPFNVVLFLTSL. Residues 264-280 lie on the Extracellular side of the membrane; the sequence is HSMHILDGCSISQQLTY. The helical transmembrane segment at 281 to 304 threads the bilayer; that stretch reads ATHVTEIISFTHCCVNPVIYAFVG. At 305 to 355 the chain is on the cytoplasmic side; sequence EKFKKHLSEIFQKSCSQIFNYLGRQMPRESCEKSSSCQQHSSRSSSVDYIL.

Belongs to the G-protein coupled receptor 1 family.

The protein localises to the cell membrane. In terms of biological role, receptor for the chemokine CCL1/SCYA1/I-309. May regulate monocyte chemotaxis and thymic cell line apoptosis. Alternative coreceptor with CD4 for HIV-1 infection. This Homo sapiens (Human) protein is C-C chemokine receptor type 8 (CCR8).